We begin with the raw amino-acid sequence, 357 residues long: Protein XRP2 (357 aa).

Residues 1 to 11 (MGCFFSKRRKP) show a composition bias toward basic residues. Residues 1–39 (MGCFFSKRRKPAQGGQQQGASQEPAAGEEKAPQYSWDQR) are disordered. Gly-2 carries the N-myristoyl glycine lipid modification. Cys-3 carries S-palmitoyl cysteine lipidation. Residues 12 to 25 (AQGGQQQGASQEPA) are compositionally biased toward low complexity. In terms of domain architecture, C-CAP/cofactor C-like spans 32-186 (PQYSWDQRAK…TWSNIHDFTP (155 aa)). Residues 105-106 (GS) and 122-125 (QQFR) contribute to the GTP site.

The protein belongs to the TBCC family. Myristoylated on Gly-2; which may be required for membrane targeting. Post-translationally, palmitoylated on Cys-3; which may be required for plasma membrane targeting.

Its subcellular location is the cell membrane. In terms of biological role, acts as a GTPase-activating protein (GAP) for tubulin in concert with tubulin-specific chaperone C, but does not enhance tubulin heterodimerization. Acts as a GTPase-activating protein. May act as guanine nucleotide dissociation inhibitor towards ADP-ribosylation factor-like proteins. This chain is Protein XRP2 (RP2), found in Gallus gallus (Chicken).